Here is a 1165-residue protein sequence, read N- to C-terminus: Phenyloxazoline synthase MbtB (1165 aa).

The Carrier 1 domain occupies 5-78; the sequence is PARSEDIREE…AWAQLVTAGR (74 aa). Ser-39 carries the O-(pantetheine 4'-phosphoryl)serine modification. Residues 77 to 100 are disordered; the sequence is GRQDTDSAAPPADSSGDPSGETEP. Residues 97 to 393 form a condensation/cyclization region; that stretch reads ETEPFALAPM…SSLLLDVDLV (297 aa). The interval 578-973 is adenylation; that stretch reads SYAQLRDQAL…RVPGVRTAVA (396 aa). A Carrier 2 domain is found at 1055–1131; the sequence is AASTPLEGAL…ALAAVLRAAE (77 aa). Residue Ser-1090 is modified to O-(pantetheine 4'-phosphoryl)serine.

This sequence belongs to the ATP-dependent AMP-binding enzyme family. MbtB subfamily. Pantetheine 4'-phosphate is required as a cofactor. In terms of processing, 4'-phosphopantetheine is transferred from CoA to a specific serine in each of the two carrier protein domains, leading to their activation from apo to holo forms.

The protein operates within siderophore biosynthesis; mycobactin biosynthesis. Its function is as follows. Involved in the initial steps of the mycobactin biosynthetic pathway. Putatively couples activated salicylic acid with serine or threonine and cyclizes this precursor to the hydroxyphenyloxazoline ring system present in this class of siderophores. The sequence is that of Phenyloxazoline synthase MbtB (mbtB) from Mycolicibacterium paratuberculosis (strain ATCC BAA-968 / K-10) (Mycobacterium paratuberculosis).